Consider the following 404-residue polypeptide: Propionate kinase (404 aa).

It belongs to the acetokinase family. PduW subfamily.

It localises to the cytoplasm. It carries out the reaction propanoate + ATP = propanoyl phosphate + ADP. Its pathway is polyol metabolism; 1,2-propanediol degradation. Its function is as follows. Works with phosphate acetyltransferase (pta) to capture exogenous propionate and regenerate propionyl-CoA during degradation of 1,2-propanediol (1,2-PD). The protein is Propionate kinase of Citrobacter koseri (strain ATCC BAA-895 / CDC 4225-83 / SGSC4696).